We begin with the raw amino-acid sequence, 1259 residues long: Receptor tyrosine-protein kinase erbB-2 (1259 aa).

The N-terminal stretch at 1–22 is a signal peptide; sequence MELAAWCRWGLLLALLPSGAAG. Residues 23–653 are Extracellular-facing; that stretch reads TQVCTGTDMK…EQRASPVTSI (631 aa). C26 and C53 form a disulfide bridge. The N-linked (GlcNAc...) asparagine glycan is linked to N68. 13 cysteine pairs are disulfide-bonded: C162–C192, C195–C204, C199–C212, C220–C227, C224–C235, C236–C244, C240–C252, C255–C264, C268–C295, C299–C311, C315–C331, C334–C338, and C342–C367. At T182 the chain carries Phosphothreonine. N259 carries N-linked (GlcNAc...) asparagine glycosylation. N421 carries an N-linked (GlcNAc...) asparagine glycan. Intrachain disulfides connect C475–C504, C511–C519, and C514–C527. Residue N529 is glycosylated (N-linked (GlcNAc...) asparagine). 8 cysteine pairs are disulfide-bonded: C530-C539, C543-C559, C562-C575, C566-C583, C586-C595, C599-C622, C625-C633, and C629-C641. A glycan (N-linked (GlcNAc...) asparagine) is linked at N570. N628 carries N-linked (GlcNAc...) asparagine glycosylation. A helical membrane pass occupies residues 654 to 674; the sequence is IAAVVGILLAVVVGLVLGILI. Residues 675 to 688 form a required for interaction with KPNB1 and EEA1 region; it reads KRRRQKIRKYTMRR. Residues 675–688 carry the Nuclear localization signal motif; that stretch reads KRRRQKIRKYTMRR. Topologically, residues 675-1259 are cytoplasmic; that stretch reads KRRRQKIRKY…PEYLGLDVPV (585 aa). One can recognise a Protein kinase domain in the interval 719–986; that stretch reads LRKVKVLGSG…RMARDPQRFV (268 aa). ATP-binding positions include 725 to 733 and K752; that span reads LGSGAFGTV. The active-site Proton acceptor is D844. Y876 carries the phosphotyrosine modification. The interval 1027-1183 is disordered; the sequence is QGFFCPEPTP…PKTLSPGKNG (157 aa). Phosphoserine occurs at positions 1077, 1082, and 1106. At Y1111 the chain carries Phosphotyrosine. A Phosphotyrosine; by autocatalysis modification is found at Y1138. Residues 1145-1160 show a composition bias toward pro residues; the sequence is WPQPPLALEGPLPPSR. Phosphothreonine is present on T1165. The segment at 1199 to 1201 is interaction with PIK3C2B; that stretch reads EYL. A Phosphotyrosine modification is found at Y1200. Positions 1203-1259 are disordered; that stretch reads PRGRAAPQPHPPPAFSPAFDNLYYWDQDPSERGSPPSTFEGTPTAENPEYLGLDVPV. The span at 1237–1247 shows a compositional bias: polar residues; sequence PPSTFEGTPTA. At Y1252 the chain carries Phosphotyrosine; by autocatalysis.

It belongs to the protein kinase superfamily. Tyr protein kinase family. EGF receptor subfamily. In terms of assembly, homodimer. Heterodimer with EGFR, ERBB3 and ERBB4. Part of a complex with EGFR and either PIK3C2A or PIK3C2B. May interact with PIK3C2B when phosphorylated on Tyr-1200. Interacts with PRKCABP and PLXNB1. Interacts (when phosphorylated on Tyr-1252) with MEMO1. Interacts with MUC1. Interacts (when phosphorylated on Tyr-1138) with GRB7 (via SH2 domain). Interacts (when phosphorylated on Tyr-1252) with ERBIN. Interacts with SRC, KPNB1, PTK6, RANBP2, EEA1, CRM1, CLTC, RPA194, MYOC and ACTB. Interacts (preferentially with the tyrosine phosphorylated form) with CPNE3; this interaction occurs at the cell membrane and is increased in a growth factor heregulin-dependent manner. Interacts with HSP90AA1 and HSP90AB1 in an ATP-dependent manner; the interaction suppresses ERBB2 kinase activity. Interacts with SORL1; this interaction regulates ERBB2 subcellular distribution by promoting its recycling after internalization from endosomes back to the plasma membrane, hence stimulates ERBB2-mediated signaling. Interacts with SH3BGRL. Interacts with ROR1. In terms of processing, autophosphorylated. Autophosphorylation occurs in trans, i.e. one subunit of the dimeric receptor phosphorylates tyrosine residues on the other subunit. Ligand-binding increases phosphorylation on tyrosine residues. Signaling via SEMA4C promotes phosphorylation at Tyr-1252. Dephosphorylated by PTPN12.

The protein resides in the cell membrane. It is found in the cell projection. Its subcellular location is the ruffle membrane. It localises to the early endosome. The protein localises to the cytoplasm. The protein resides in the perinuclear region. It is found in the nucleus. The enzyme catalyses L-tyrosyl-[protein] + ATP = O-phospho-L-tyrosyl-[protein] + ADP + H(+). Protein tyrosine kinase that is part of several cell surface receptor complexes, but that apparently needs a coreceptor for ligand binding. Essential component of a neuregulin-receptor complex, although neuregulins do not interact with it alone. GP30 is a potential ligand for this receptor. Regulates outgrowth and stabilization of peripheral microtubules (MTs). Upon ERBB2 activation, the MEMO1-RHOA-DIAPH1 signaling pathway elicits the phosphorylation and thus the inhibition of GSK3B at cell membrane. This prevents the phosphorylation of APC and CLASP2, allowing its association with the cell membrane. In turn, membrane-bound APC allows the localization of MACF1 to the cell membrane, which is required for microtubule capture and stabilization. Functionally, in the nucleus is involved in transcriptional regulation. Associates with the 5'-TCAAATTC-3' sequence in the PTGS2/COX-2 promoter and activates its transcription. Implicated in transcriptional activation of CDKN1A; the function involves STAT3 and SRC. Involved in the transcription of rRNA genes by RNA Pol I and enhances protein synthesis and cell growth. The polypeptide is Receptor tyrosine-protein kinase erbB-2 (ERBB2) (Canis lupus familiaris (Dog)).